The chain runs to 181 residues: Kappa-casein (181 aa).

The signal sequence occupies residues 1-21 (MMRNFIVVVNILALTLPFLAA). The residue at position 123 (threonine 123) is a Phosphothreonine. O-linked (GalNAc...) threonine glycosylation is found at threonine 134, threonine 144, and threonine 155. At serine 162 the chain carries Phosphoserine; alternate. Serine 162 carries O-linked (GalNAc...) serine; alternate glycosylation. Serine 178 carries the post-translational modification Phosphoserine.

Belongs to the kappa-casein family. As to expression, mammary gland specific. Secreted in milk.

It localises to the secreted. Kappa-casein stabilizes micelle formation, preventing casein precipitation in milk. This is Kappa-casein (Csn3) from Mus musculus (Mouse).